A 104-amino-acid polypeptide reads, in one-letter code: MAAIQGIEGVISQLQATAMAASGQETHSQSTVSFAGQLHAALDRISDRQTAARVQAEKFTLGEPGIALNDVMADMQKASVSMQMGIQVRNKLVAAYQEVMSMQV.

It belongs to the FliE family.

The protein resides in the bacterial flagellum basal body. The sequence is that of Flagellar hook-basal body complex protein FliE from Salmonella newport (strain SL254).